Reading from the N-terminus, the 916-residue chain is MLTNIAKKIFGSRNDRLLKQYRKSVARINALEEQMQALSDADLQAKTAEFKQRLADGQTLDGILPEAFAVCREASRRTLGMRHFDVQLIGGMVLHDGKIAEMRTGEGKTLVATLAVYLNALAGKGVHVVTVNDYLASRDAGIMEPLYNFLGLTVGVIISDMQPFDRQNAYAADITYGTNNEFGFDYLRDNMVTDQYDKVQRELNFAVVDEVDSILIDEARTPLIISGQADDNIQLYQIMNTVPPHLVRQETEEGEGDYWVDEKAHQVILSEAGHEHAEQILTQMGLLAENDSLYSAANIALMHHLMAALRAHSLFHKDQHYVIQDGEIVIVDEFTGRLMSGRRWSEGLHQAVEAKEGVEIKRENQTLASITFQNYFRLYTKLSGMTGTADTEAFEFQSIYNLETVIIPTNRPVQRKDFNDQIFRSAEEKFEAVVKDIEECHKRGQPVLVGTTSIENSELVSHLLQKAGLPHNVLNAKEHEREALIVAQAGKVGAITVATNMAGRGTDIVLGGNLKHQTDAIRADETLSDEEKQAQIAALEDGWQAEHDKVMEAGGLHIIGTERHESRRIDNQLRGRSGRQGDPGSSRFYLSFEDPLLRLFALDRAAAILNRLAPERGVAIEHNLLTRQIEGAQRKVEGRNFDMRKQVLEYDDVANEQRKVIYSQRNEILTSKDISDLMQEIRSDVVSDLVDTYMPPDSMEEQWDIPTLENRLAAEFRLHEDIQSWLKADNAIDGQDIKERLIERIENEYAAKTELVGKQAMADFERNVMLQVIDNQWREHLAAMDYLRQGIHLRSYAQKNPKQEYKREAFTMFQDLWNGIKFHIASLLTSVQIEQNPVAVVEEQPIGNIQSIHSESPDMEELLGQSQTDLVTEAFNPDGTDFSPEALEARGQIVHRNDPCPCGSGLKYKQCHGKLA.

ATP is bound by residues Q87, 105–109 (GEGKT), and D507. Zn(2+) is bound by residues C900, C902, C911, and H912.

Belongs to the SecA family. As to quaternary structure, monomer and homodimer. Part of the essential Sec protein translocation apparatus which comprises SecA, SecYEG and auxiliary proteins SecDF-YajC and YidC. Zn(2+) is required as a cofactor.

It is found in the cell inner membrane. Its subcellular location is the cytoplasm. The enzyme catalyses ATP + H2O + cellular proteinSide 1 = ADP + phosphate + cellular proteinSide 2.. Functionally, part of the Sec protein translocase complex. Interacts with the SecYEG preprotein conducting channel. Has a central role in coupling the hydrolysis of ATP to the transfer of proteins into and across the cell membrane, serving both as a receptor for the preprotein-SecB complex and as an ATP-driven molecular motor driving the stepwise translocation of polypeptide chains across the membrane. The chain is Protein translocase subunit SecA from Neisseria meningitidis serogroup C / serotype 2a (strain ATCC 700532 / DSM 15464 / FAM18).